The sequence spans 1240 residues: MARRRIRSRIRKSHFYTFRCLRPKTLDDQGPHVINGPGYTRIVHCNQPHLHLATKLIRYRSNYVSTTRYNLLTFLPKCLYEQFHRVANFYFLVAAILSVFPLSPFNKWSMIAPLVFVVGLSMGKEALEDWRRFMQDVEVNSRKASVHKGSGDFGRRTWKRIRVGDIVRVEKDEFFPADLLLLSSSYEDGICYVETMNLDGETNLKVKRCLDATLALEKDESFQNFSGTIKCEDPNPNLYTFVGNLECDGQVYPLDPNQILLRDSKLRNTAYVYGVVVFTGHDTKVMQNSTKSPSKRSRIEKRMDYIIYTLFALLLTVSFISSLGFAVMTKLLMAEWWYLRPDKPESLTNPTNPLYAWVVHLITALLLYGYLIPISLYVSIEVVKVLQAHFINQDLQLYDSESGTPAQARTSNLNEELGQVDTILSDKTGTLTCNQMDFLKCSIAGTSYGVRASEVELAAAKQMAMDLEEKGEEVANLSMNKGRTQRYAKLASKTSSDFELETVVTASDEKDQKQNTGVKGFSFEDNRLMNENWLNEPNSDDILMFFRILAVCHTAIPEVDEDTGMCTYEAESPDEVAFLVASREFGFEFTKRTQSSVFIAERFSSSGQPVDREYKILNLLDFTSKRKRMSAIVRDEEGQILLLCKGADSIIFERLSKSGKEYLGATSKHLNVYGEAGLRTLALGYRKLDETEYAAWNSEFHKAKTSVGADRDEMLEKVSDMMEKELILVGATAVEDKLQKGVPQCIDNLAQAGLKIWVLTGDKMETAINIGYACSLLRQGMKQISISLTNVEESSQNSEAAAKESILMQITNASQMIKIEKDPHAAFALIIDGKTLTYALKDDVKYQFLALAVDCASVICCRVSPKQKALVTRLAKEGTGKTTLAIGDGANDVGMIQEADIGVGISGVEGMQAVMASDFSIAQFRFLERLLVVHGHWCYKRIAQMICYFFYKNITFGLTLFYFECFTGFSGQSIYNDSYLLLFNVVLTSLPVISLGVFEQDVPSDVCLQFPALYQQGPKNLFFDWYRILGWMGNGVYASIVIFTLNLGIFHVQSFRSDGQTADMNAMGTAMFTCIIWAVNVQIALTMSHFTWIQHVMIWGSIGAWYVFLALYGMLPVKLSGNIFHMLVEILAPAPIFWLTSLLVIAATTLPYLFHISYQRSVNPLDHHIIQEIKHFRIDVEDERMWKREKSKAREKTKIGFTARVDAKIRQLRGRLQRKHSVLSVMSGTSSNDTPSSNSQ.

Topologically, residues 1-75 (MARRRIRSRI…TTRYNLLTFL (75 aa)) are cytoplasmic. A helical transmembrane segment spans residues 76 to 97 (PKCLYEQFHRVANFYFLVAAIL). Residues 98–101 (SVFP) are Extracellular-facing. Residues 102 to 124 (LSPFNKWSMIAPLVFVVGLSMGK) form a helical membrane-spanning segment. The Cytoplasmic segment spans residues 125 to 306 (EALEDWRRFM…SRIEKRMDYI (182 aa)). Residues 307 to 328 (IYTLFALLLTVSFISSLGFAVM) form a helical membrane-spanning segment. Over 329–360 (TKLLMAEWWYLRPDKPESLTNPTNPLYAWVVH) the chain is Extracellular. A helical transmembrane segment spans residues 361–378 (LITALLLYGYLIPISLYV). The Cytoplasmic portion of the chain corresponds to 379–943 (SIEVVKVLQA…HGHWCYKRIA (565 aa)). Aspartate 426 (4-aspartylphosphate intermediate) is an active-site residue. Lysine 625 is covalently cross-linked (Glycyl lysine isopeptide (Lys-Gly) (interchain with G-Cter in ubiquitin)). Mg(2+) is bound by residues aspartate 888 and aspartate 892. The chain crosses the membrane as a helical span at residues 944 to 963 (QMICYFFYKNITFGLTLFYF). Topologically, residues 964-977 (ECFTGFSGQSIYND) are extracellular. The helical transmembrane segment at 978 to 997 (SYLLLFNVVLTSLPVISLGV) threads the bilayer. The Cytoplasmic segment spans residues 998 to 1027 (FEQDVPSDVCLQFPALYQQGPKNLFFDWYR). A helical membrane pass occupies residues 1028–1050 (ILGWMGNGVYASIVIFTLNLGIF). Topologically, residues 1051-1063 (HVQSFRSDGQTAD) are extracellular. The chain crosses the membrane as a helical span at residues 1064–1086 (MNAMGTAMFTCIIWAVNVQIALT). At 1087–1092 (MSHFTW) the chain is on the cytoplasmic side. A helical transmembrane segment spans residues 1093–1113 (IQHVMIWGSIGAWYVFLALYG). Residues 1114–1130 (MLPVKLSGNIFHMLVEI) lie on the Extracellular side of the membrane. The chain crosses the membrane as a helical span at residues 1131–1155 (LAPAPIFWLTSLLVIAATTLPYLFH). Residues 1156-1240 (ISYQRSVNPL…SNDTPSSNSQ (85 aa)) lie on the Cytoplasmic side of the membrane.

It belongs to the cation transport ATPase (P-type) (TC 3.A.3) family. Type IV subfamily.

It is found in the cell membrane. The protein resides in the endomembrane system. It carries out the reaction ATP + H2O + phospholipidSide 1 = ADP + phosphate + phospholipidSide 2.. In terms of biological role, involved in transport of phospholipids and in regulation of pollen plasma membrane lipid asymmetry. In Arabidopsis thaliana (Mouse-ear cress), this protein is Phospholipid-transporting ATPase 6.